A 222-amino-acid polypeptide reads, in one-letter code: Collectrin (222 aa).

An N-terminal signal peptide occupies residues 1 to 14; sequence MLWLLFFLVTAIHA. The Extracellular segment spans residues 15-141; the sequence is ELCQPGAENA…LAPPMDPSVP (127 aa). A Collectrin-like domain is found at 21 to 222; sequence AENAFKVRLS…MTEDERLTPL (202 aa). Asn-76 and Asn-93 each carry an N-linked (GlcNAc...) asparagine glycan. A helical transmembrane segment spans residues 142 to 162; it reads IWIIIFGVIFCIIIVAIALLI. The Cytoplasmic portion of the chain corresponds to 163 to 222; sequence LSGIWQRRRKNKEPSEVDDAEDKCENMITIENGIPSDPLDMKGGHINDAFMTEDERLTPL. 2 positions are modified to phosphothreonine: Thr-214 and Thr-220.

This sequence belongs to the CLTRN family. As to quaternary structure, monomer. Homodimer; dimerization prevents CLTRN cleavage by BACE2. Interacts with SLC6A18; this interaction regulates the trafficking of SLC6A18 to the cell membrane and its amino acid transporter activity. Interacts with SLC6A19; this interaction regulates the trafficking of SLC6A19 to the cell membrane and its amino acid transporter activity. Interacts with SNAPIN. Post-translationally, glycosylated. Glycosylation is required for plasma membrane localization and for its cleavage by BACE2. Proteolytically processed in pancreatic beta cells by BACE2 leading to the generation and extracellular release of soluble CLTRN, and a corresponding cell-associated C-terminal fragment which is later cleaved by gamma-secretase. This shedding process inactivates CLTRN. Three cleavage sites have been identified for BACE2, two clustered sites after Phe-116 and Leu-118 and a more membrane proximal site at Phe-125; the preferred BACE2 cleavage site seems to be between Phe-125 and Leu-126, Phe-116 and Leu-118 act as alternative sites. In terms of tissue distribution, kidney; collecting ducts. Pancreas; beta cells of islets.

The protein resides in the cell membrane. Plays an important role in amino acid transport by acting as binding partner of amino acid transporters SLC6A18 and SLC6A19, regulating their trafficking on the cell surface and their amino acid transporter activity. May also play a role in trafficking of amino acid transporters SLC3A1 and SLC7A9 to the renal cortical cell membrane. Regulator of SNARE complex function. Stimulator of beta cell replication. The protein is Collectrin of Homo sapiens (Human).